The following is a 153-amino-acid chain: Cell division protein SepF (153 aa).

Belongs to the SepF family. As to quaternary structure, homodimer. Interacts with FtsZ.

It localises to the cytoplasm. Cell division protein that is part of the divisome complex and is recruited early to the Z-ring. Probably stimulates Z-ring formation, perhaps through the cross-linking of FtsZ protofilaments. Its function overlaps with FtsA. The chain is Cell division protein SepF from Clostridium novyi (strain NT).